Consider the following 259-residue polypeptide: Aliphatic sulfonates import ATP-binding protein SsuB 2 (259 aa).

An ABC transporter domain is found at 17 to 238 (LDILGLWKGF…VRSSQAFTSI (222 aa)). An ATP-binding site is contributed by 49 to 56 (GRSGCGKS).

It belongs to the ABC transporter superfamily. Aliphatic sulfonates importer (TC 3.A.1.17.2) family. In terms of assembly, the complex is composed of two ATP-binding proteins (SsuB), two transmembrane proteins (SsuC) and a solute-binding protein (SsuA).

The protein localises to the cell inner membrane. The enzyme catalyses ATP + H2O + aliphatic sulfonate-[sulfonate-binding protein]Side 1 = ADP + phosphate + aliphatic sulfonateSide 2 + [sulfonate-binding protein]Side 1.. Part of the ABC transporter complex SsuABC involved in aliphatic sulfonates import. Responsible for energy coupling to the transport system. The sequence is that of Aliphatic sulfonates import ATP-binding protein SsuB 2 from Agrobacterium fabrum (strain C58 / ATCC 33970) (Agrobacterium tumefaciens (strain C58)).